Here is a 61-residue protein sequence, read N- to C-terminus: Small ribosomal subunit protein uS14 (61 aa).

C24, C27, C40, and C43 together coordinate Zn(2+).

It belongs to the universal ribosomal protein uS14 family. Zinc-binding uS14 subfamily. Part of the 30S ribosomal subunit. Contacts proteins S3 and S10. The cofactor is Zn(2+).

In terms of biological role, binds 16S rRNA, required for the assembly of 30S particles and may also be responsible for determining the conformation of the 16S rRNA at the A site. In Desulfosudis oleivorans (strain DSM 6200 / JCM 39069 / Hxd3) (Desulfococcus oleovorans), this protein is Small ribosomal subunit protein uS14.